Here is a 2430-residue protein sequence, read N- to C-terminus: Spatacsin (2430 aa).

2 positions are modified to phosphoserine: Ser1942 and Ser1943.

As to quaternary structure, interacts with AP5Z1, AP5B1, AP5S1 and ZFYVE26. In terms of tissue distribution, ubiquitously expressed at low level. Expressed in embryonic and adult cortical projection neurons.

The protein localises to the cytoplasm. It is found in the cytosol. The protein resides in the nucleus. Its subcellular location is the cell projection. It localises to the axon. The protein localises to the dendrite. It is found in the synapse. Functionally, may play a role in neurite plasticity by maintaining cytoskeleton stability and regulating synaptic vesicle transport. The sequence is that of Spatacsin (Spg11) from Mus musculus (Mouse).